The sequence spans 491 residues: Aspartyl/glutamyl-tRNA(Asn/Gln) amidotransferase subunit B (491 aa).

The protein belongs to the GatB/GatE family. GatB subfamily. In terms of assembly, heterotrimer of A, B and C subunits.

It carries out the reaction L-glutamyl-tRNA(Gln) + L-glutamine + ATP + H2O = L-glutaminyl-tRNA(Gln) + L-glutamate + ADP + phosphate + H(+). The enzyme catalyses L-aspartyl-tRNA(Asn) + L-glutamine + ATP + H2O = L-asparaginyl-tRNA(Asn) + L-glutamate + ADP + phosphate + 2 H(+). Its function is as follows. Allows the formation of correctly charged Asn-tRNA(Asn) or Gln-tRNA(Gln) through the transamidation of misacylated Asp-tRNA(Asn) or Glu-tRNA(Gln) in organisms which lack either or both of asparaginyl-tRNA or glutaminyl-tRNA synthetases. The reaction takes place in the presence of glutamine and ATP through an activated phospho-Asp-tRNA(Asn) or phospho-Glu-tRNA(Gln). This Trichormus variabilis (strain ATCC 29413 / PCC 7937) (Anabaena variabilis) protein is Aspartyl/glutamyl-tRNA(Asn/Gln) amidotransferase subunit B.